The sequence spans 2598 residues: Partially reducing polyketide synthase men1 (2598 aa).

A Ketosynthase family 3 (KS3) domain is found at 7–435; the sequence is SQSIAIVGLS…GSNAHAILDD (429 aa). Catalysis depends on for beta-ketoacyl synthase activity residues Cys-181, His-316, and His-358. Residues 450-459 show a composition bias toward basic residues; that stretch reads GKSHHHHHQH. Disordered regions lie at residues 450–490 and 537–557; these read GKSH…NGTT and AEKQQQQQQQQGGQGGADPEK. Low complexity predominate over residues 474–490; sequence VNGTSEVNGTSGVNGTT. Positions 611-915 constitute a Malonyl-CoA:ACP transacylase (MAT) domain; it reads YVFTGQGAQW…RGPVTQILQS (305 aa). The N-terminal hotdog fold stretch occupies residues 1008-1151; it reads LGLIGAPMPN…GSVAVEFGAL (144 aa). Residues 1008 to 1325 form the PKS/mFAS DH domain; sequence LGLIGAPMPN…CVEMPSASGM (318 aa). The interval 1009–1323 is dehydratase (DH) domain; it reads GLIGAPMPNF…LVCVEMPSAS (315 aa). The C-terminal hotdog fold stretch occupies residues 1169-1325; the sequence is TISQEVDVFY…CVEMPSASGM (157 aa). One can recognise an Enoyl reductase (ER) domain in the interval 1886–2197; it reads GMLNTLCFEI…ARSRQDKIVI (312 aa). A Ketoreductase (KR) domain is found at 2222–2399; that stretch reads TYLIAGGLGG…AATIDLGIVK (178 aa). Residues 2510-2587 form the Carrier domain; sequence EAARLVSAAV…AFASDLAKKG (78 aa). Ser-2547 carries the O-(pantetheine 4'-phosphoryl)serine modification.

It depends on pantetheine 4'-phosphate as a cofactor.

The protein operates within secondary metabolite biosynthesis. In terms of biological role, partially reducing polyketide synthase; part of the gene cluster that mediates the biosynthesis of menisporopsin A, a bioactive macrocyclic polylactone. The biosynthesis of menisporopsin A is performed by a reducing (man1) and a non-reducing (men2) polyketide synthase that catalyze the formation of each menisporopsin A subunits, while the esterification and cyclolactonization activities are probably peformed by the unusual thioesterase domain of men2. First, a reduced diketide intermediate, 3-hydroxybutyryl-S-ACP is produced by men1 and transferred to men2; this is followed by a second reduced diketide which is further elongated using 3 units of malonyl-coA to form a reduced pentaketide. The cyclization of this intermediate by the PT domain forms the second subunit, 2,4-dihydroxy-6-(2-hydroxy-n-propyl)benzoyl-S-ACP. The TE domain of men2 then esterifies the secondary hydroxyl group on the side chain of the second subunit with the acyl-TE of the first subunit to form the first ester intermediate. This process occurs iteratively to form a linear tetraester intermediate. The final subunit is formed by a similar process, except that an extra malonyl-CoA is required in an additional elongation step to form a reduced hexaketide intermediate, and the carbonyl group next to the secondary hydroxyl group is reduced by a trans-acting ketoreductase. Again, the PT domain catalyzes cyclization to form the largest subunit, 2,4-dihydroxy-6-(2,4-dihydroxy-n-pentyl) benzoyl-S-ACP. Then the linear pentaester intermediate is formed. In this step, if the intermediate transfer rate is slow, intra- molecular cyclization involving the secondary hydroxyl group of the pentaester intermediate may occur to form menisporopsin B. Alternatively, transfer of the pentaester intermediate to the TE domain would allow cyclolactonization to be catalyzed by the TE to form menisporopsin A. In Menisporopsis theobromae, this protein is Partially reducing polyketide synthase men1.